We begin with the raw amino-acid sequence, 341 residues long: Malate dehydrogenase, mitochondrial (341 aa).

NAD(+) is bound by residues 35–41 and aspartate 61; that span reads GAGGGIG. Residues arginine 109 and arginine 115 each contribute to the substrate site. NAD(+) is bound at residue asparagine 122. Substrate is bound by residues asparagine 147 and arginine 181. The active-site Proton acceptor is histidine 205. Methionine 254 contacts NAD(+).

The protein belongs to the LDH/MDH superfamily. MDH type 1 family. In terms of assembly, homodimer.

Its subcellular location is the mitochondrion matrix. The catalysed reaction is (S)-malate + NAD(+) = oxaloacetate + NADH + H(+). The polypeptide is Malate dehydrogenase, mitochondrial (MDH1) (Schizosaccharomyces pombe (strain 972 / ATCC 24843) (Fission yeast)).